We begin with the raw amino-acid sequence, 112 residues long: UPF0102 protein NIS_1551 (112 aa).

The protein belongs to the UPF0102 family.

In Nitratiruptor sp. (strain SB155-2), this protein is UPF0102 protein NIS_1551.